We begin with the raw amino-acid sequence, 197 residues long: Protein shisa-4 (197 aa).

An N-terminal signal peptide occupies residues 1–27; sequence MPPAGPRGTAPLAAVVLLVLGAPLALA. Residues 28 to 87 lie on the Extracellular side of the membrane; the sequence is SEDCLWYLDRNGSWHPGFDCEFFTFCCGTCYQRYCCRDLTLLITERQQKHCLAFSPKTIA. Residues 88–108 traverse the membrane as a helical segment; the sequence is GIASAVILFVAVVATTICCFL. Residues 109–197 are Cytoplasmic-facing; that stretch reads CSCCYLYRRR…MPPQPSYPGA (89 aa).

It belongs to the shisa family.

The protein resides in the membrane. This chain is Protein shisa-4 (Shisa4), found in Mus musculus (Mouse).